The primary structure comprises 401 residues: Enoyl-[acyl-carrier-protein] reductase [NADH] (401 aa).

Residues 48-53 (GSSSGY), 74-75 (FE), 111-112 (DA), and 139-140 (LA) contribute to the NAD(+) site. Y225 lines the substrate pocket. Residue Y235 is the Proton donor of the active site. Residues K244 and 273–275 (VVT) contribute to the NAD(+) site.

This sequence belongs to the TER reductase family. Monomer.

The catalysed reaction is a 2,3-saturated acyl-[ACP] + NAD(+) = a (2E)-enoyl-[ACP] + NADH + H(+). It functions in the pathway lipid metabolism; fatty acid biosynthesis. Involved in the final reduction of the elongation cycle of fatty acid synthesis (FAS II). Catalyzes the reduction of a carbon-carbon double bond in an enoyl moiety that is covalently linked to an acyl carrier protein (ACP). This chain is Enoyl-[acyl-carrier-protein] reductase [NADH], found in Shewanella putrefaciens (strain CN-32 / ATCC BAA-453).